The following is a 115-amino-acid chain: Con-Ins G1b (115 aa).

Residues 1–24 form the signal peptide; the sequence is MTTSFYFLLMALGLLLYVCQSSFG. Positions 25–29 are excised as a propeptide; the sequence is NQHTR. Pro-34 carries the 4-hydroxyproline; partial modification. 3 disulfide bridges follow: Cys-38–Cys-101, Cys-50–Cys-114, and Cys-100–Cys-105. Glu-41 carries the 4-carboxyglutamate modification. Residues 52–94 constitute a propeptide, c peptide; sequence RKRNDAGEKRGRASPLWQRRGFLSKLKARAKRNGAFHLPRDGR. Glu-98 carries the 4-carboxyglutamate modification. Residue Pro-104 is modified to 4-hydroxyproline; partial. The residue at position 109 (Glu-109) is a 4-carboxyglutamate; partial. Cys-114 bears the Cysteine amide mark.

Belongs to the insulin family. Heterodimer of A and B chains; disulfide-linked. As to expression, expressed by the venom gland.

It localises to the secreted. Functionally, this venom insulin, from a fish-hunting cone snail, facilitates prey capture by rapidly inducing hypoglycemic shock. It is one of the smallest known insulin found in nature and lacks the C-terminal segment of the B chain that, in human insulin, mediates engagement of the insulin receptor (INSR) and assembly of the hormone's hexameric storage form. Despite lacking this segment, it both binds and activates human insulin receptor (long isoform (HIR-B) of INSR) with only a 10-fold lower potency. In vivo, intraperitoneal injection of this peptide into zebrafish lowers blood glucose with the same potency than human insulin. In addition, when applied to water, this peptide reduces overall locomotor activity of zebrafish larvae, observed as a significant decrease in the percentage of time spent swimming and movement frequency. The protein is Con-Ins G1b of Conus geographus (Geography cone).